The sequence spans 487 residues: MSLAKDNIWKLLAPLVVMGVMFLIPVPDGMPPQAWHYFAVFVAMIVGMILEPIPATAISFIAVTICVIGSNYLLFDAKELADPAFNAQKQALKWGLAGFSSTTVWLVFGAFIFALGYEVSGLGRRIALFLVKFMGKRTLTLGYAIVIIDILLAPFTPSNTARTGGTVFPVIKNLPPLFKSFPNDPSARRIGGYLMWMMVISTSLSSSMFVTGAAPNVLGLEFVSKIAGIQISWLQWFLCFLPVGVILLIIAPWLSYVLYKPEITHSEEVATWAGDELKTMGALTRREWTLIGLVLLSLGLWVFGSEVINATAVGLLAVSLMLALHVVPWKDITRYNSAWNTLVNLATLVVMANGLTRSGFIDWFAGTMSTHLEGFSPNATVIVLVLVFYFAHYLFASLSAHTATMLPVILAVGKGIPGVPMEQLCILLVLSIGIMGCLTPYATGPGVIIYGCGYVKSKDYWRLGAIFGVIYISMLLLVGWPILAMWN.

14 consecutive transmembrane segments (helical) span residues 11–31 (LLAP…DGMP), 60–80 (FIAV…AKEL), 95–115 (GLAG…IFAL), 138–158 (TLTL…FTPS), 190–210 (IGGY…SMFV), 214–234 (APNV…ISWL), 237–257 (FLCF…LSYV), 288–308 (WTLI…SEVI), 309–329 (NATA…VVPW), 345–365 (LATL…DWFA), 379–399 (ATVI…ASLS), 401–421 (HTAT…GVPM), 424–444 (LCIL…YATG), and 463–483 (LGAI…WPIL).

The protein belongs to the SLC13A/DASS transporter (TC 2.A.47) family. DIT1 subfamily.

Its subcellular location is the cell inner membrane. Responsible for the uptake of citrate in exchange to the efflux of succinate. Has a relatively broad specificity for C(4)-dicarboxylates and tricarboxylates. This chain is Citrate/succinate antiporter (citT), found in Escherichia coli O157:H7.